The sequence spans 123 residues: Intracellular iron chaperone frataxin (123 aa).

In terms of assembly, homodimer, upon Fe(2+) binding. Interacts with the SufS/SufU complex. Interacts with CpfC. Fe(2+) serves as cofactor.

The protein resides in the cytoplasm. Plays an essential role in iron intracellular trafficking to iron cofactor biogenesis systems including iron-sulfur cluster (Fe-S) or heme assembly. Promotes the biosynthesis of iron-sulfur clusters by delivering Fe to the complex composed of the cysteine desulfurase SufS and the zinc-dependent sulfurtransferase SufU. Also plays a critical role in coproporphyrin-dependent heme b biogenesis and thus provides an essential function for the bacterial global metabolism. In Bacillus subtilis (strain 168), this protein is Intracellular iron chaperone frataxin (fra).